The primary structure comprises 310 residues: uncharacterized protein (310 aa).

Helical transmembrane passes span 10–30, 44–64, 78–98, 113–133, and 161–181; these read AVLS…AYAI, TVNL…ATPA, FSSG…GYSA, LGIA…WILW, and VVVA…PLIA. Residues 285–297 show a composition bias toward basic and acidic residues; the sequence is PLEDPKSWQHPDE. Residues 285-310 form a disordered region; it reads PLEDPKSWQHPDEFPPSAPLNRDKPN.

The protein belongs to the cation diffusion facilitator (CDF) transporter (TC 2.A.4) family.

It localises to the cell membrane. This is an uncharacterized protein from Synechocystis sp. (strain ATCC 27184 / PCC 6803 / Kazusa).